Here is a 103-residue protein sequence, read N- to C-terminus: Large ribosomal subunit protein bL21 (103 aa).

The protein belongs to the bacterial ribosomal protein bL21 family. As to quaternary structure, part of the 50S ribosomal subunit. Contacts protein L20.

Its function is as follows. This protein binds to 23S rRNA in the presence of protein L20. The chain is Large ribosomal subunit protein bL21 from Acidovorax sp. (strain JS42).